Consider the following 93-residue polypeptide: Small ribosomal subunit protein mS33 (93 aa).

Belongs to the mitochondrion-specific ribosomal protein mS33 family. Component of the mitochondrial small ribosomal subunit (mt-SSU). Mature yeast 74S mitochondrial ribosomes consist of a small (37S) and a large (54S) subunit. The 37S small subunit contains a 15S ribosomal RNA (15S mt-rRNA) and at least 32 different proteins. The 54S large subunit contains a 21S rRNA (21S mt-rRNA) and at least 45 different proteins.

The protein resides in the mitochondrion. Functionally, component of the mitochondrial ribosome (mitoribosome), a dedicated translation machinery responsible for the synthesis of mitochondrial genome-encoded proteins, including at least some of the essential transmembrane subunits of the mitochondrial respiratory chain. The mitoribosomes are attached to the mitochondrial inner membrane and translation products are cotranslationally integrated into the membrane. The protein is Small ribosomal subunit protein mS33 (rsm27) of Schizosaccharomyces pombe (strain 972 / ATCC 24843) (Fission yeast).